Reading from the N-terminus, the 801-residue chain is DNA mismatch repair protein MutS (801 aa).

An ATP-binding site is contributed by Gly590–Ser597.

It belongs to the DNA mismatch repair MutS family.

In terms of biological role, this protein is involved in the repair of mismatches in DNA. It is possible that it carries out the mismatch recognition step. This protein has a weak ATPase activity. In Thermotoga neapolitana (strain ATCC 49049 / DSM 4359 / NBRC 107923 / NS-E), this protein is DNA mismatch repair protein MutS.